Reading from the N-terminus, the 914-residue chain is Calcium-activated chloride channel regulator 1 (914 aa).

Residues 1-21 (MGPFKSSVFILILHLLEGALS) form the signal peptide. Positions 46–199 (DETLIQQIKD…GITGTNVVKK (154 aa)) are metalloprotease domain. His-156 contacts Zn(2+). Glu-157 is an active-site residue. Positions 160 and 167 each coordinate Zn(2+). The region spanning 306 to 475 (IVCLVLDKSG…NGLIDAFGAL (170 aa)) is the VWFA domain. N-linked (GlcNAc...) asparagine glycosylation is found at Asn-503, Asn-585, Asn-770, Asn-804, Asn-810, Asn-831, Asn-836, and Asn-890.

The protein belongs to the CLCR family. In terms of processing, glycosylated. Post-translationally, the 125-kDa product is autoproteolytically processed by the metalloprotease domain and yields to two cell-surface-associated subunits, a 90-kDa protein and a group of 37- to 41-kDa proteins. The cleavage is necessary for calcium-activated chloride channel (CaCC) activation activity. In terms of tissue distribution, highly expressed in small intestine and colon namely in intestinal basal crypt epithelia and goblet cells, and appendix. Weakly expressed in uterus, testis and kidney. Expressed in the airways epithelium of both asthmatic and healthy patients. Expressed in the bronchial epithelium, especially in mucus-producing goblet cells. Expressed in normal turbinate mucosa and nasal polyp. Expressed in.

The protein localises to the secreted. It localises to the extracellular space. The protein resides in the cell membrane. In terms of biological role, may be involved in mediating calcium-activated chloride conductance. May play critical roles in goblet cell metaplasia, mucus hypersecretion, cystic fibrosis and AHR. May be involved in the regulation of mucus production and/or secretion by goblet cells. Involved in the regulation of tissue inflammation in the innate immune response. May play a role as a tumor suppressor. Induces MUC5AC. The sequence is that of Calcium-activated chloride channel regulator 1 (CLCA1) from Homo sapiens (Human).